The chain runs to 337 residues: Cytoskeleton protein RodZ (337 aa).

Residues Met-1–Gly-111 lie on the Cytoplasmic side of the membrane. The region spanning Leu-19 to Leu-71 is the HTH cro/C1-type domain. The segment at residues Gln-30–Glu-49 is a DNA-binding region (H-T-H motif). A helical; Signal-anchor for type II membrane protein membrane pass occupies residues Trp-112–Trp-132. At Trp-133 to Gln-337 the chain is on the periplasmic side. The disordered stretch occupies residues Asn-155–Ala-220. A compositionally biased stretch (polar residues) spans Ser-160–Val-192. The segment covering Pro-193–Pro-217 has biased composition (low complexity).

The protein belongs to the RodZ family.

It is found in the cell inner membrane. Functionally, cytoskeletal protein that is involved in cell-shape control through regulation of the length of the long axis. This Citrobacter koseri (strain ATCC BAA-895 / CDC 4225-83 / SGSC4696) protein is Cytoskeleton protein RodZ.